The primary structure comprises 206 residues: uncharacterized protein (206 aa).

This is an uncharacterized protein from Saccharomyces cerevisiae (strain ATCC 204508 / S288c) (Baker's yeast).